The following is a 556-amino-acid chain: Oxygen-dependent choline dehydrogenase (556 aa).

FAD is bound at residue aspartate 4–glutamate 33. Histidine 473 functions as the Proton acceptor in the catalytic mechanism.

The protein belongs to the GMC oxidoreductase family. Requires FAD as cofactor.

It carries out the reaction choline + A = betaine aldehyde + AH2. It catalyses the reaction betaine aldehyde + NAD(+) + H2O = glycine betaine + NADH + 2 H(+). It participates in amine and polyamine biosynthesis; betaine biosynthesis via choline pathway; betaine aldehyde from choline (cytochrome c reductase route): step 1/1. Functionally, involved in the biosynthesis of the osmoprotectant glycine betaine. Catalyzes the oxidation of choline to betaine aldehyde and betaine aldehyde to glycine betaine at the same rate. This chain is Oxygen-dependent choline dehydrogenase, found in Escherichia coli (strain K12 / DH10B).